The sequence spans 254 residues: Methylthioribulose-1-phosphate dehydratase (254 aa).

Cys-110 serves as a coordination point for substrate. Zn(2+) contacts are provided by His-127 and His-129. Residue Glu-156 is the Proton donor/acceptor of the active site. His-212 is a binding site for Zn(2+).

Belongs to the aldolase class II family. MtnB subfamily. Zn(2+) is required as a cofactor.

The protein resides in the cytoplasm. The catalysed reaction is 5-(methylsulfanyl)-D-ribulose 1-phosphate = 5-methylsulfanyl-2,3-dioxopentyl phosphate + H2O. The protein operates within amino-acid biosynthesis; L-methionine biosynthesis via salvage pathway; L-methionine from S-methyl-5-thio-alpha-D-ribose 1-phosphate: step 2/6. Catalyzes the dehydration of methylthioribulose-1-phosphate (MTRu-1-P) into 2,3-diketo-5-methylthiopentyl-1-phosphate (DK-MTP-1-P). This is Methylthioribulose-1-phosphate dehydratase from Talaromyces marneffei (strain ATCC 18224 / CBS 334.59 / QM 7333) (Penicillium marneffei).